The primary structure comprises 65 residues: Hirudin-3B (65 aa).

The tract at residues 1-3 (VVY) is interaction with thrombin active site. Disulfide bonds link Cys6-Cys14, Cys16-Cys28, and Cys22-Cys39. The segment at 40–65 (VTGEGTPKPQSHNDGDFEEIPEEYLQ) is disordered. Thr45 is a glycosylation site (O-linked (GalNAc...) threonine). Residues 55-65 (DFEEIPEEYLQ) are interaction with fibrinogen-binding exosite of thrombin. Positions 55-65 (DFEEIPEEYLQ) are enriched in acidic residues. At Tyr63 the chain carries Sulfotyrosine.

It belongs to the protease inhibitor I14 (hirudin) family.

It is found in the secreted. Its function is as follows. Hirudin is a potent thrombin-specific protease inhibitor. It forms a stable non-covalent complex with alpha-thrombin, thereby abolishing its ability to cleave fibrinogen. This is Hirudin-3B from Hirudo medicinalis (Medicinal leech).